The chain runs to 360 residues: Methyltransferase pvhD (360 aa).

Residues 201 to 202, D227, 251 to 252, R267, and R268 each bind S-adenosyl-L-methionine; these read SG and DL.

Belongs to the class I-like SAM-binding methyltransferase superfamily. Cation-independent O-methyltransferase family.

It functions in the pathway secondary metabolite biosynthesis. Its function is as follows. Methyltransferase; part of the gene cluster that mediates the biosynthesis of varicidin A, an antifungal natural product containing a cis-octahydrodecalin core. The PKS module of pvhA together with the enoylreductase pvhC catalyze the formation of the polyketide unit which is then conjugated to L-isoleucine by the condensation domain of the NRPS module. Activity of the Dieckmann cyclase domain (RED) of pvhA results in release of an acyclic tetramate. The cytochrome P450 monooxygenase pvhE then catalyzes the oxidation of the C21 methyl group to a to carboxylate group. The methyltransferase pvhD then further methylates the pvhE product. The Diels-Alderase pvhB is able to catalyze Diels-Alder cycloaddition using both pvhE and pvhD products as substrates to form the decalin ring, yielding varicidin B and A, respectively. In Talaromyces variabilis (Penicillium variabile), this protein is Methyltransferase pvhD.